The primary structure comprises 166 residues: Large ribosomal subunit protein uL10 (166 aa).

This sequence belongs to the universal ribosomal protein uL10 family. Part of the ribosomal stalk of the 50S ribosomal subunit. The N-terminus interacts with L11 and the large rRNA to form the base of the stalk. The C-terminus forms an elongated spine to which L12 dimers bind in a sequential fashion forming a multimeric L10(L12)X complex.

Functionally, forms part of the ribosomal stalk, playing a central role in the interaction of the ribosome with GTP-bound translation factors. The sequence is that of Large ribosomal subunit protein uL10 from Neisseria gonorrhoeae (strain ATCC 700825 / FA 1090).